The chain runs to 193 residues: Ancillary SecYEG translocon subunit (193 aa).

Topologically, residues 1–11 (MIKNSYINEKL) are cytoplasmic. A helical transmembrane segment spans residues 12-34 (NFYQKSFLTCMLLIVIVIVYFFS). The Extracellular portion of the chain corresponds to 35–193 (KNYLDKPKNS…IIQMKINNYN (159 aa)).

The protein belongs to the YfgM family. In terms of assembly, interacts with the Sec translocon. Forms a complex with PpiD.

It is found in the cell membrane. Its function is as follows. May mediate protein transfer from the Sec translocon to the chaperone network via its extracellular C-terminal region. The polypeptide is Ancillary SecYEG translocon subunit (Buchnera aphidicola subsp. Baizongia pistaciae (strain Bp)).